The chain runs to 674 residues: Forkhead box protein P1 (674 aa).

Over residues 1 to 19 the composition is skewed to polar residues; it reads MMQESGTETKSNGSAIQNG. Positions 1 to 44 are disordered; the sequence is MMQESGTETKSNGSAIQNGSSGGNHLLECGSLREGRSNGETPAV. Residue serine 82 is modified to Phosphoserine. Over residues 269-281 the composition is skewed to polar residues; the sequence is MNPHASTNGQLSV. The segment at 269–296 is disordered; the sequence is MNPHASTNGQLSVHTPKRESLSHEEHPH. Residues 284–296 show a composition bias toward basic and acidic residues; that stretch reads PKRESLSHEEHPH. Lysine 285 participates in a covalent cross-link: Glycyl lysine isopeptide (Lys-Gly) (interchain with G-Cter in SUMO2). Residues 304 to 329 form a C2H2-type zinc finger; that stretch reads GVCKWPGCEAVCEDFQSFLKHLNSEH. Residues 346-367 form a leucine-zipper region; the sequence is VQQLELQLAKDKERLQAMMTHL. Residues lysine 370 and lysine 375 each participate in a glycyl lysine isopeptide (Lys-Gly) (interchain with G-Cter in SUMO2) cross-link. Positions 380–384 are CTBP1-binding; the sequence is PLNLV. The segment covering 388–401 has biased composition (polar residues); sequence TLSKSASEASPQSL. Residues 388–427 form a disordered region; the sequence is TLSKSASEASPQSLPHTPTTPTAPITPATQGPSVITTTSM. Positions 402-419 are enriched in low complexity; it reads PHTPTTPTAPITPATQGP. Residue lysine 440 forms a Glycyl lysine isopeptide (Lys-Gly) (interchain with G-Cter in SUMO2) linkage. The fork-head DNA-binding region spans 462–552; that stretch reads RPPFTYASLI…PQKISGNPSL (91 aa). Residues 608–674 form a disordered region; sequence EHTNSNESDS…EDEPVNEDME (67 aa). Positions 609 to 620 are enriched in polar residues; that stretch reads HTNSNESDSSPG. Threonine 650 is modified (phosphothreonine). A Phosphoserine modification is found at serine 655. Over residues 664–674 the composition is skewed to acidic residues; it reads YEDEPVNEDME.

Forms homodimers and heterodimers with FOXP2 and FOXP4. Dimerization is required for DNA-binding. Self-associates. Interacts with CTBP1. Interacts with NCOR2 and AR. Interacts with FOXP2. Interacts with TBR1. Interacts with AURKA; this interaction facilitates the phosphorylation of FOXP1, which suppresses the expression of FBXL7. Interacts with ZMYM2.

It localises to the nucleus. Its function is as follows. Transcriptional repressor. Can act with CTBP1 to synergistically repress transcription but CTPBP1 is not essential. Plays an important role in the specification and differentiation of lung epithelium. Acts cooperatively with FOXP4 to regulate lung secretory epithelial cell fate and regeneration by restricting the goblet cell lineage program; the function may involve regulation of AGR2. Essential transcriptional regulator of B-cell development. Involved in regulation of cardiac muscle cell proliferation. Involved in the columnar organization of spinal motor neurons. Promotes the formation of the lateral motor neuron column (LMC) and the preganglionic motor column (PGC) and is required for respective appropriate motor axon projections. The segment-appropriate generation of spinal cord motor columns requires cooperation with other Hox proteins. Can regulate PITX3 promoter activity; may promote midbrain identity in embryonic stem cell-derived dopamine neurons by regulating PITX3. Negatively regulates the differentiation of T follicular helper cells T(FH)s. Involved in maintenance of hair follicle stem cell quiescence; the function probably involves regulation of FGF18. Represses transcription of various pro-apoptotic genes and cooperates with NF-kappa B-signaling in promoting B-cell expansion by inhibition of caspase-dependent apoptosis. Binds to CSF1R promoter elements and is involved in regulation of monocyte differentiation and macrophage functions; repression of CSF1R in monocytes seems to involve NCOR2 as corepressor. Involved in endothelial cell proliferation, tube formation and migration indicative for a role in angiogenesis; the role in neovascularization seems to implicate suppression of SEMA5B. Can negatively regulate androgen receptor signaling. Acts as a transcriptional activator of the FBXL7 promoter; this activity is regulated by AURKA. This chain is Forkhead box protein P1 (FOXP1), found in Bos taurus (Bovine).